A 430-amino-acid chain; its full sequence is 3-phosphoshikimate 1-carboxyvinyltransferase (430 aa).

3 residues coordinate 3-phosphoshikimate: Lys21, Ser22, and Arg26. Position 21 (Lys21) interacts with phosphoenolpyruvate. The phosphoenolpyruvate site is built by Gly94 and Arg122. 4 residues coordinate 3-phosphoshikimate: Ser167, Gln169, Asp317, and Lys344. Gln169 is a binding site for phosphoenolpyruvate. Residue Asp317 is the Proton acceptor of the active site. Arg348 and Arg390 together coordinate phosphoenolpyruvate.

It belongs to the EPSP synthase family. As to quaternary structure, monomer.

It is found in the cytoplasm. The enzyme catalyses 3-phosphoshikimate + phosphoenolpyruvate = 5-O-(1-carboxyvinyl)-3-phosphoshikimate + phosphate. It participates in metabolic intermediate biosynthesis; chorismate biosynthesis; chorismate from D-erythrose 4-phosphate and phosphoenolpyruvate: step 6/7. In terms of biological role, catalyzes the transfer of the enolpyruvyl moiety of phosphoenolpyruvate (PEP) to the 5-hydroxyl of shikimate-3-phosphate (S3P) to produce enolpyruvyl shikimate-3-phosphate and inorganic phosphate. The sequence is that of 3-phosphoshikimate 1-carboxyvinyltransferase from Thermodesulfovibrio yellowstonii (strain ATCC 51303 / DSM 11347 / YP87).